The following is a 480-amino-acid chain: NADH-quinone oxidoreductase subunit N 1 (480 aa).

Helical transmembrane passes span 12-32 (LSMP…IGVF), 38-58 (TPTV…WLVL), 78-98 (FMKV…VGHA), 106-126 (FEFP…ISAN), 128-148 (LISL…VAAI), 163-183 (FVLG…VYGF), 203-223 (LGLV…ISAV), 241-261 (TAFF…RIVI), 271-291 (WQQI…FAAI), 303-323 (SSIG…MAGV), 326-346 (VILY…CILA), 372-392 (ATVL…AGFF), 396-416 (FVFV…GVLA), and 449-469 (LVFG…GPLG).

It belongs to the complex I subunit 2 family. As to quaternary structure, NDH-1 is composed of 14 different subunits. Subunits NuoA, H, J, K, L, M, N constitute the membrane sector of the complex.

The protein resides in the cell inner membrane. The enzyme catalyses a quinone + NADH + 5 H(+)(in) = a quinol + NAD(+) + 4 H(+)(out). NDH-1 shuttles electrons from NADH, via FMN and iron-sulfur (Fe-S) centers, to quinones in the respiratory chain. The immediate electron acceptor for the enzyme in this species is believed to be ubiquinone. Couples the redox reaction to proton translocation (for every two electrons transferred, four hydrogen ions are translocated across the cytoplasmic membrane), and thus conserves the redox energy in a proton gradient. The chain is NADH-quinone oxidoreductase subunit N 1 from Rhizobium meliloti (strain 1021) (Ensifer meliloti).